Here is a 270-residue protein sequence, read N- to C-terminus: Lipopolysaccharide core biosynthesis glycosyltransferase LpsC (270 aa).

It belongs to the glycosyltransferase 2 family. WaaE/KdtX subfamily.

Its pathway is bacterial outer membrane biogenesis; LPS core biosynthesis. This is Lipopolysaccharide core biosynthesis glycosyltransferase LpsC (lpsC) from Rhizobium meliloti (strain 1021) (Ensifer meliloti).